Consider the following 435-residue polypeptide: AP-2 complex subunit mu (435 aa).

S45 bears the Phosphoserine mark. T156 carries the phosphothreonine modification. Residues 170-434 (RNELFLDVLE…IGRSGIYETR (265 aa)) form the MHD domain. The a 1,2-diacyl-sn-glycero-3-phospho-(1D-myo-inositol-3,4,5-trisphosphate) site is built by K341, K345, and K354.

The protein belongs to the adaptor complexes medium subunit family. In terms of assembly, adaptor protein complex 2 (AP-2) is a heterotetramer composed of two large adaptins (alpha-type subunit AP2A1 or AP2A2 and beta-type subunit AP2B1), a medium adaptin (mu-type subunit AP2M1) and a small adaptin (sigma-type subunit AP2S1). Interacts with ATP6V1H and MEGF10. Interacts with EGFR and TTGN1. Interacts with F2R. Interacts with PIP5K1C; tyrosine phosphorylation of PIP5K1C weakens the interaction. Interacts with KIAA0319; required for clathrin-mediated endocytosis of KIAA0319. Interacts with DVL2 (via DEP domain). Interacts with KCNQ1; mediates estrogen-induced internalization via clathrin-coated vesicles. Interacts with P2RX4 (via internalization motif). Together with AP2A1 or AP2A2 and AP2B1, it interacts with ADAM10; this interaction facilitates ADAM10 endocytosis from the plasma membrane during long-term potentiation in hippocampal neurons. Probably interacts with ACE2 (via endocytic sorting signal motif); the interaction is inhibited by ACE2 phosphorylation. Interacts with RALBP1; the interaction is direct. Interacts with TMEM106B (via N-terminus). Post-translationally, phosphorylation at Thr-156 increases the affinity of the AP-2 complex for cargo membrane proteins during the initial stages of endocytosis.

It is found in the cell membrane. It localises to the membrane. The protein resides in the coated pit. Functionally, component of the adaptor protein complex 2 (AP-2). Adaptor protein complexes function in protein transport via transport vesicles in different membrane traffic pathways. Adaptor protein complexes are vesicle coat components and appear to be involved in cargo selection and vesicle formation. AP-2 is involved in clathrin-dependent endocytosis in which cargo proteins are incorporated into vesicles surrounded by clathrin (clathrin-coated vesicles, CCVs) which are destined for fusion with the early endosome. The clathrin lattice serves as a mechanical scaffold but is itself unable to bind directly to membrane components. Clathrin-associated adaptor protein (AP) complexes which can bind directly to both the clathrin lattice and to the lipid and protein components of membranes are considered to be the major clathrin adaptors contributing the CCV formation. AP-2 also serves as a cargo receptor to selectively sort the membrane proteins involved in receptor-mediated endocytosis. AP-2 seems to play a role in the recycling of synaptic vesicle membranes from the presynaptic surface. AP-2 recognizes Y-X-X-[FILMV] (Y-X-X-Phi) and [ED]-X-X-X-L-[LI] endocytosis signal motifs within the cytosolic tails of transmembrane cargo molecules. AP-2 may also play a role in maintaining normal post-endocytic trafficking through the ARF6-regulated, non-clathrin pathway. During long-term potentiation in hippocampal neurons, AP-2 is responsible for the endocytosis of ADAM10. The AP-2 mu subunit binds to transmembrane cargo proteins; it recognizes the Y-X-X-Phi motifs. The surface region interacting with to the Y-X-X-Phi motif is inaccessible in cytosolic AP-2, but becomes accessible through a conformational change following phosphorylation of AP-2 mu subunit at Thr-156 in membrane-associated AP-2. The membrane-specific phosphorylation event appears to involve assembled clathrin which activates the AP-2 mu kinase AAK1. Plays a role in endocytosis of frizzled family members upon Wnt signaling. This chain is AP-2 complex subunit mu (AP2M1), found in Bos taurus (Bovine).